A 109-amino-acid polypeptide reads, in one-letter code: Nucleoid-associated protein ASA_2087 (109 aa).

2 disordered regions span residues 1–23 (MFGKGGMGNLMKQAQQMQERMQK) and 87–109 (QSKSKMGELTGGMQLPPGMKLPF). Residues 11–23 (MKQAQQMQERMQK) are compositionally biased toward low complexity.

It belongs to the YbaB/EbfC family. As to quaternary structure, homodimer.

The protein localises to the cytoplasm. The protein resides in the nucleoid. Functionally, binds to DNA and alters its conformation. May be involved in regulation of gene expression, nucleoid organization and DNA protection. The polypeptide is Nucleoid-associated protein ASA_2087 (Aeromonas salmonicida (strain A449)).